The sequence spans 314 residues: Methionyl-tRNA formyltransferase (314 aa).

113–116 (SILP) serves as a coordination point for (6S)-5,6,7,8-tetrahydrofolate.

It belongs to the Fmt family.

The catalysed reaction is L-methionyl-tRNA(fMet) + (6R)-10-formyltetrahydrofolate = N-formyl-L-methionyl-tRNA(fMet) + (6S)-5,6,7,8-tetrahydrofolate + H(+). Its function is as follows. Attaches a formyl group to the free amino group of methionyl-tRNA(fMet). The formyl group appears to play a dual role in the initiator identity of N-formylmethionyl-tRNA by promoting its recognition by IF2 and preventing the misappropriation of this tRNA by the elongation apparatus. The polypeptide is Methionyl-tRNA formyltransferase (Photobacterium profundum (strain SS9)).